The chain runs to 310 residues: MEFKHVSVLLDECINALNIKEDGIYVDCTLGGAGHSSEIVKRLSSDGRLIRFDQDKDALKAAGERLKDYKNVTYVHSNFYAIYDVLTDLGIDGVDGILMDLGVSSYQLDNGERGFSYMQDAPLDMRMNRENEFSAYEIVNTYSEEELYRIIKEYGEEKFAKRIASFIVKNREEKNIETTLELVEIIKAAIPAKARREGPHPAKRTFQAIRIEVNKELEIISKTILDGVKKLNKGGRMAIITFHSLEDRIVKNTFKELANPCTCPSEFPVCVCNRKPEVKLISRKPIEASKEELEFNPRSRSAKLRIIEKL.

S-adenosyl-L-methionine-binding positions include 33 to 35 (AGH), aspartate 53, phenylalanine 79, aspartate 100, and glutamine 107.

This sequence belongs to the methyltransferase superfamily. RsmH family.

The protein resides in the cytoplasm. The enzyme catalyses cytidine(1402) in 16S rRNA + S-adenosyl-L-methionine = N(4)-methylcytidine(1402) in 16S rRNA + S-adenosyl-L-homocysteine + H(+). In terms of biological role, specifically methylates the N4 position of cytidine in position 1402 (C1402) of 16S rRNA. The chain is Ribosomal RNA small subunit methyltransferase H from Clostridium perfringens (strain 13 / Type A).